The chain runs to 101 residues: Replication restart protein PriB (101 aa).

Residues 1-101 (MATNHLVLSG…LHAENVELKT (101 aa)) enclose the SSB domain.

The protein belongs to the PriB family. In terms of assembly, homodimer. Interacts with PriA and DnaT. Component of the replication restart primosome. Primosome assembly occurs via a 'hand-off' mechanism. PriA binds to replication forks, subsequently PriB then DnaT bind; DnaT then displaces ssDNA to generate the helicase loading substrate.

In terms of biological role, involved in the restart of stalled replication forks, which reloads the replicative helicase on sites other than the origin of replication; the PriA-PriB pathway is the major replication restart pathway. During primosome assembly it facilitates complex formation between PriA and DnaT on DNA; stabilizes PriA on DNA. Stimulates the DNA unwinding activity of PriA helicase. This Shewanella woodyi (strain ATCC 51908 / MS32) protein is Replication restart protein PriB.